We begin with the raw amino-acid sequence, 272 residues long: Shikimate dehydrogenase (NADP(+)) (272 aa).

Residues 14 to 16 (SKS) and threonine 61 each bind shikimate. Lysine 65 functions as the Proton acceptor in the catalytic mechanism. Glutamate 77 contacts NADP(+). 2 residues coordinate shikimate: asparagine 86 and aspartate 102. NADP(+) is bound by residues 126–130 (GAGGA), 150–155 (NRTFSK), and methionine 213. Tyrosine 215 contacts shikimate. Position 237 (glycine 237) interacts with NADP(+).

Belongs to the shikimate dehydrogenase family. As to quaternary structure, homodimer.

It catalyses the reaction shikimate + NADP(+) = 3-dehydroshikimate + NADPH + H(+). It participates in metabolic intermediate biosynthesis; chorismate biosynthesis; chorismate from D-erythrose 4-phosphate and phosphoenolpyruvate: step 4/7. Functionally, involved in the biosynthesis of the chorismate, which leads to the biosynthesis of aromatic amino acids. Catalyzes the reversible NADPH linked reduction of 3-dehydroshikimate (DHSA) to yield shikimate (SA). In Psychromonas ingrahamii (strain DSM 17664 / CCUG 51855 / 37), this protein is Shikimate dehydrogenase (NADP(+)).